The sequence spans 342 residues: Transmembrane protein 115 homolog (342 aa).

Residues methionine 1 to lysine 21 lie on the Cytoplasmic side of the membrane. The helical transmembrane segment at isoleucine 22 to cysteine 42 threads the bilayer. Topologically, residues isoleucine 43–lysine 121 are lumenal. Residue asparagine 114 is glycosylated (N-linked (GlcNAc...) asparagine). A helical transmembrane segment spans residues phenylalanine 122–serine 142. The Cytoplasmic segment spans residues phenylalanine 143–threonine 159. Residues isoleucine 160–leucine 180 form a helical membrane-spanning segment. Over lysine 181–glutamine 207 the chain is Lumenal. A helical membrane pass occupies residues isoleucine 208–tryptophan 228. The Cytoplasmic portion of the chain corresponds to serine 229–proline 342.

This sequence belongs to the TMEM115 family. In terms of assembly, homooligomer.

It is found in the golgi apparatus membrane. Its function is as follows. May play a role in retrograde transport of proteins from the Golgi to the endoplasmic reticulum. In Saccharomyces cerevisiae (strain ATCC 204508 / S288c) (Baker's yeast), this protein is Transmembrane protein 115 homolog.